The primary structure comprises 1501 residues: 1-phosphatidylinositol 4,5-bisphosphate phosphodiesterase eta-2 (1501 aa).

The disordered stretch occupies residues 28–47; the sequence is RGFSGLQGGRRRGRGEKGIP. The segment at 75–229 is necessary for plasma membrane localization; that stretch reads MPGPQPSAAS…WVTGLRYLMA (155 aa). Residues 121 to 229 enclose the PH domain; that stretch reads SAMQEGTQMV…WVTGLRYLMA (109 aa). 2 EF-hand domains span residues 243–278 and 279–315; these read TRDQWLKQTFDEADKNGDGSLSISEVLQLLHKLNVN and LPRQRVKQMFREADTDDHQGTLGFEEFCAFYKMMSTR. Ca(2+)-binding residues include Asp256, Asn258, Asp260, Ser262, and Glu267. A PI-PLC X-box domain is found at 400–545; sequence QDMTQPLSHY…LKGKILVKGK (146 aa). His415 is a catalytic residue. The Ca(2+) site is built by Asn416, Glu445, and Asp447. His459 is an active-site residue. Glu494 contacts Ca(2+). Residues Lys543 and Lys545 each coordinate substrate. Disordered stretches follow at residues 551 to 570 and 609 to 700; these read ISEDAEEGEVSDEDSADEME and DPND…QKKT. Positions 553 to 570 are enriched in acidic residues; that stretch reads EDAEEGEVSDEDSADEME. Ser561 and Ser565 each carry phosphoserine. A compositionally biased stretch (basic and acidic residues) spans 626–638; it reads RKAEAKKGQSKVE. Basic residues predominate over residues 662-673; it reads SKRKKKGSKIKK. A phosphoserine mark is found at Ser676 and Ser686. Residues 707–821 form the PI-PLC Y-box domain; that stretch reads LSDLVKYTKS…GYVLKPQCMC (115 aa). Positions 734 and 761 each coordinate substrate. The 130-residue stretch at 821-950 folds into the C2 domain; it reads CQGVFNPNSE…PGYRHVYLEG (130 aa). Residues Ile865, Asp867, Asp891, Asp920, His921, and Asp922 each contribute to the Ca(2+) site. Disordered regions lie at residues 986–1073, 1089–1238, 1273–1305, and 1398–1469; these read GSLD…RLFP, EEPA…SSND, SAARPDLPPVTKSKSNPNLRVAGGLPTAPDELQ, and GDIT…GACS. Positions 1089-1107 are enriched in low complexity; the sequence is EEPALGPGLPLQAAAPTGP. Composition is skewed to basic and acidic residues over residues 1142 to 1151 and 1215 to 1227; these read GGRENEEPPL and LWQRLEPGSHRDS. Positions 1421–1439 are enriched in low complexity; the sequence is RRSSSRSQSRVRAIASRAR. The span at 1440–1463 shows a compositional bias: basic and acidic residues; the sequence is QAQERQQRLRGQDSRGPPEEERGT.

It depends on Ca(2+) as a cofactor. In terms of tissue distribution, specifically detected in the brain, with higher level in cerebral cortex, olfactory bulb and hippocampus (at protein level). Expressed in the pyramidal cells of the hippocampus, but also in eye and lung.

It is found in the cytoplasm. The protein localises to the cell membrane. It carries out the reaction a 1,2-diacyl-sn-glycero-3-phospho-(1D-myo-inositol-4,5-bisphosphate) + H2O = 1D-myo-inositol 1,4,5-trisphosphate + a 1,2-diacyl-sn-glycerol + H(+). Its activity is regulated as follows. Activity is stimulated by GNB1:GNG2. Its function is as follows. The production of the second messenger molecules diacylglycerol (DAG) and inositol 1,4,5-trisphosphate (IP3) is mediated by activated phosphatidylinositol-specific phospholipase C enzymes. This phospholipase activity is very sensitive to calcium. May be important for formation and maintenance of the neuronal network in the postnatal brain. This Mus musculus (Mouse) protein is 1-phosphatidylinositol 4,5-bisphosphate phosphodiesterase eta-2.